Consider the following 323-residue polypeptide: Germination protease (323 aa).

Residues methionine 1–aspartate 6 constitute a propeptide that is removed on maturation.

The protein belongs to the peptidase A25 family. As to quaternary structure, homotetramer. Autoproteolytically processed. The inactive tetrameric zymogen termed p46 autoprocesses to a smaller form termed p41, which is active only during spore germination.

The catalysed reaction is Endopeptidase action with P4 Glu or Asp, P1 preferably Glu &gt; Asp, P1' hydrophobic and P2' Ala.. Its function is as follows. Initiates the rapid degradation of small, acid-soluble proteins during spore germination. The polypeptide is Germination protease (Clostridium tetani (strain Massachusetts / E88)).